Reading from the N-terminus, the 431-residue chain is MLDIQLLRSNTAAVAERLARRGYDFDTARFDALEERRKSVQVKTEELQASRNSISKQIGALKGQGKHEEAQAAMDQVAQIKTDLEQAAADLDAVQKELDAWLLSIPNLPHESVPPGKDETENVEVRKVGTPREFDFEIKDHVDLGEPLGLDFEGGAKLSGARFTVMRGQIARLHRALAQFMLDTHMLQHGYTEHYTPYIVDDTTLQGTGQLPKFAEDLFHVTRGGDETKTTQYLIPTAEVTLTNTVAGSIIPSEQLPLKLTAHSPCFRSEAGSYGKDTRGLIRQHQFDKVEMVQIVHPEKSYGALEEMVGHAENILKALELPYRVITLCTGDMGFSAAKTYDLEVWVPAQNTYREISSCSNCEDFQARRMKARFKDENGKNRLVHTLNGSGLAVGRTLVAVLENHQNADGSINIPAALQPYMGGVTKLEVK.

237–239 (TAE) is an L-serine binding site. 268-270 (RSE) contacts ATP. E291 lines the L-serine pocket. 355-358 (EISS) provides a ligand contact to ATP. An L-serine-binding site is contributed by S390.

It belongs to the class-II aminoacyl-tRNA synthetase family. Type-1 seryl-tRNA synthetase subfamily. As to quaternary structure, homodimer. The tRNA molecule binds across the dimer.

It localises to the cytoplasm. It carries out the reaction tRNA(Ser) + L-serine + ATP = L-seryl-tRNA(Ser) + AMP + diphosphate + H(+). It catalyses the reaction tRNA(Sec) + L-serine + ATP = L-seryl-tRNA(Sec) + AMP + diphosphate + H(+). It participates in aminoacyl-tRNA biosynthesis; selenocysteinyl-tRNA(Sec) biosynthesis; L-seryl-tRNA(Sec) from L-serine and tRNA(Sec): step 1/1. Catalyzes the attachment of serine to tRNA(Ser). Is also able to aminoacylate tRNA(Sec) with serine, to form the misacylated tRNA L-seryl-tRNA(Sec), which will be further converted into selenocysteinyl-tRNA(Sec). This Neisseria gonorrhoeae (strain ATCC 700825 / FA 1090) protein is Serine--tRNA ligase.